The primary structure comprises 364 residues: Peptide chain release factor 2 (364 aa).

An N5-methylglutamine modification is found at Gln251.

Belongs to the prokaryotic/mitochondrial release factor family. In terms of processing, methylated by PrmC. Methylation increases the termination efficiency of RF2.

The protein localises to the cytoplasm. Peptide chain release factor 2 directs the termination of translation in response to the peptide chain termination codons UGA and UAA. This is Peptide chain release factor 2 from Sulfurovum sp. (strain NBC37-1).